A 221-amino-acid chain; its full sequence is uncharacterized protein (221 aa).

The segment at 40–162 is disordered; the sequence is TIEVEPSPVQ…EPPEKVELSP (123 aa). Positions 47-60 are enriched in polar residues; that stretch reads PVQQDNPPISSEQA. Residues 82–92 are compositionally biased toward low complexity; the sequence is SSAQQEATAQT.

This is an uncharacterized protein from Homo sapiens (Human).